The following is a 426-amino-acid chain: Histidine--tRNA ligase (426 aa).

It belongs to the class-II aminoacyl-tRNA synthetase family. As to quaternary structure, homodimer.

It localises to the cytoplasm. It carries out the reaction tRNA(His) + L-histidine + ATP = L-histidyl-tRNA(His) + AMP + diphosphate + H(+). The chain is Histidine--tRNA ligase from Picosynechococcus sp. (strain ATCC 27264 / PCC 7002 / PR-6) (Agmenellum quadruplicatum).